A 444-amino-acid chain; its full sequence is ATP-dependent RNA helicase SrmB (444 aa).

The Q motif signature appears at 4 to 32 (TTFSELELDESLLEALQDKGFTRPTAIQA). A Helicase ATP-binding domain is found at 35 to 209 (IPPALDGRDV…AERLLEDPVE (175 aa)). An ATP-binding site is contributed by 48–55 (APTGTGKT). The DEAD box signature appears at 157–160 (DEAD). The region spanning 238–387 (LLVHLLKQPE…ELRPKTRAPS (150 aa)) is the Helicase C-terminal domain. The span at 382–391 (KTRAPSEKQT) shows a compositional bias: basic and acidic residues. The interval 382 to 444 (KTRAPSEKQT…TGVPPQTTEE (63 aa)) is disordered. 2 stretches are compositionally biased toward basic residues: residues 394–406 (PSKKVLAKRAEKK) and 414–432 (PRVKKRHRDTKNIGKRRKP).

This sequence belongs to the DEAD box helicase family. SrmB subfamily. Interacts with the 50S ribosomal subunit. Forms a complex with the 50S ribosomal proteins L4 and L24, and a region near the 5'-end of 23S rRNA.

It is found in the cytoplasm. The catalysed reaction is ATP + H2O = ADP + phosphate + H(+). In terms of biological role, DEAD-box RNA helicase involved in the assembly of the 50S ribosomal subunit at low temperature. Exhibits RNA-stimulated ATP hydrolysis and RNA unwinding activity. Acts before DeaD. This is ATP-dependent RNA helicase SrmB from Escherichia coli (strain K12).